Here is a 101-residue protein sequence, read N- to C-terminus: Acylphosphatase (101 aa).

An Acylphosphatase-like domain is found at 13-101; the sequence is RARILVRGVV…GEFRGFEIRY (89 aa). Catalysis depends on residues Arg28 and Asn46.

It belongs to the acylphosphatase family.

The enzyme catalyses an acyl phosphate + H2O = a carboxylate + phosphate + H(+). The chain is Acylphosphatase (acyP) from Aeropyrum pernix (strain ATCC 700893 / DSM 11879 / JCM 9820 / NBRC 100138 / K1).